Consider the following 1368-residue polypeptide: DNA-directed RNA polymerase subunit beta (1368 aa).

This sequence belongs to the RNA polymerase beta chain family. The RNAP catalytic core consists of 2 alpha, 1 beta, 1 beta' and 1 omega subunit. When a sigma factor is associated with the core the holoenzyme is formed, which can initiate transcription.

It carries out the reaction RNA(n) + a ribonucleoside 5'-triphosphate = RNA(n+1) + diphosphate. DNA-dependent RNA polymerase catalyzes the transcription of DNA into RNA using the four ribonucleoside triphosphates as substrates. The protein is DNA-directed RNA polymerase subunit beta of Janthinobacterium sp. (strain Marseille) (Minibacterium massiliensis).